The chain runs to 516 residues: Cytochrome P450 monooxygenase ntnM (516 aa).

Residues I22 to I42 form a helical membrane-spanning segment. Residue C453 coordinates heme.

This sequence belongs to the cytochrome P450 family. It depends on heme as a cofactor.

The protein resides in the membrane. The protein operates within secondary metabolite biosynthesis; terpenoid biosynthesis. In terms of biological role, cytochrome P450 monooxygenase; part of the gene cluster that mediates the biosynthesis of the meroterpenoids nectripenoids A and B, as well as cochliquninone D and isocochliquninone E. The pathway probably begins with the HR-PKS ntnH that catalyzes two chain-extension steps to form a reduced triketide, which then primes the SAT domain in the NR-PKS ntnG to initiate three more cycles of extension to give a linear hexaketide corresponding to the polyketide part of nectripenoids. The FAD-dependent monooxygenase ntnJ then performs an oxidative decarboxylation at C11 of the ntnH/ntnG product, via an electrophilic aromatic hydroxylation with concomitant ipso-decarboxylation. The membrane-bound polyprenyl transferase ntnF then introduces a farnesyl group before the FAD-dependent monooxygenase ntnK functions as the first epoxidase on terminal C12'-C13' olefin, followed by a second epoxidation on C7'-C8' catalyzed by ntnA. The terpene cyclase/mutase ntnI then initiates the sequential tricyclic ring formation through protonation of the terminal epoxide and catalyzes the regioselective and stereoselective 6/6/6-tricyclic ring formation. The cytochrome P450 monooxygenase ntnM may then hydroxylate C1'. This chain is Cytochrome P450 monooxygenase ntnM, found in Nectria sp.